We begin with the raw amino-acid sequence, 571 residues long: MISGILASPGIAFGTALLLKEDEIVINRKIINIKNITKEIERFFEGRRKSIQQLTEIKTKTKEKFGEKKESIFEGHIMLLEDEELEQEVISLIKEKNMSAAAATELIIEGQAKALEKLKDEYLKNRAIDVRDIGNRLLKNILNLNIIDLNNINNEVILIAKDLTPSETAQINLKYILGFITDLGSRTSHTSIMARSLEIPAIVGTGNITKIVKNNDFIILDSINNQILINPSHKLINQTEVIKKKYLTKKNQLINLKNLQAITTDGHAIKIGSNIGNVEDIKSAKKNGAECIGLYRTEFLFMGRNCLPDENEQFQAYKTIAELMKNKSVIIRTMDIGGDKDLPYMNLPKEENPFLGWRAIRISMDRKEILHTQLNAILRASAFGKIYILFPMIISVEEIRILKSEVRKLQIQLKNNNIPFDKNIKIGIMIETPASAIIAEYLIKEVDFFSIGTNDLTQYTLAVDRGNDLISHLYNPMNPSVLKLIQQVINVSHTHGKWTGMCGELAGDERATILLLGMGLDEFSMSSISIPKIKEIIRKTSFSSAKKLAQKALTLPTNREILNLVENFVNH.

The active-site Tele-phosphohistidine intermediate is histidine 189. Phosphoenolpyruvate is bound by residues arginine 296 and arginine 332. Mg(2+) is bound by residues glutamate 431 and aspartate 455. Residues 454–455 and arginine 465 each bind phosphoenolpyruvate; that span reads ND. The active-site Proton donor is cysteine 502.

The protein belongs to the PEP-utilizing enzyme family. In terms of assembly, homodimer. Requires Mg(2+) as cofactor.

It is found in the cytoplasm. It catalyses the reaction L-histidyl-[protein] + phosphoenolpyruvate = N(pros)-phospho-L-histidyl-[protein] + pyruvate. In terms of biological role, general (non sugar-specific) component of the phosphoenolpyruvate-dependent sugar phosphotransferase system (sugar PTS). This major carbohydrate active-transport system catalyzes the phosphorylation of incoming sugar substrates concomitantly with their translocation across the cell membrane. Enzyme I transfers the phosphoryl group from phosphoenolpyruvate (PEP) to the phosphoryl carrier protein (HPr). The protein is Phosphoenolpyruvate-protein phosphotransferase (ptsI) of Buchnera aphidicola subsp. Acyrthosiphon pisum (strain APS) (Acyrthosiphon pisum symbiotic bacterium).